The following is a 710-amino-acid chain: Gastrulation-defective protein 3 (710 aa).

The helical transmembrane segment at A597–V615 threads the bilayer.

Its subcellular location is the membrane. The polypeptide is Gastrulation-defective protein 3 (gadr-3) (Caenorhabditis elegans).